The following is a 251-amino-acid chain: MPKDASGPPRSLLVLGGTSAIGLATARRLIARGARLVHLAARPSPALEKAAGELTALGAEVRTVPFDALDPESHQASLGPVFAAGDVDLVLLRFGIAGDQARDESRPLDAVRVAQTNYTGAVGAGLLCGAALQEQGHGTLVVLSSAAGVRARRADFIYGSSKAGLDAFAQGLGDALYGTGVRVMVVRPGTVLDPGTPRGDARLTTTPGQVAAAIELGLRRGSETVWVPGGLRLVMSAVRGLPRPLFRRLVV.

14 to 37 (VLGGTSAIGLATARRLIARGARLV) serves as a coordination point for NADP(+). Ser-145 provides a ligand contact to substrate. Catalysis depends on Tyr-158, which acts as the Proton acceptor.

It belongs to the short-chain dehydrogenases/reductases (SDR) family.

May be involved in the biosynthesis of a heptaene-type antibiotic. This is an uncharacterized protein from Streptomyces coelicolor.